The following is a 212-amino-acid chain: External core antigen (212 aa).

An N-terminal signal peptide occupies residues 1–19 (MQLFHLCLIISCTCPTVQA). Positions 25–27 (GWL) are HBEAG. The interval 165–212 (NAPILSTLPETTVVRRRGRSPRRRTPSPRRRRSQSPRRRRSQSRESQC) is disordered. A compositionally biased stretch (basic residues) spans 178–205 (VRRRGRSPRRRTPSPRRRRSQSPRRRRS). The stretch at 184–190 (SPRRRTP) is one 1; half-length repeat. Residues 184–206 (SPRRRTPSPRRRRSQSPRRRRSQ) form a 3 X 8 AA repeats of S-P-R-R-R-R-S-Q region. The propeptide occupies 184 to 212 (SPRRRTPSPRRRRSQSPRRRRSQSRESQC). Tandem repeats lie at residues 191 to 198 (SPRRRRSQ) and 199 to 206 (SPRRRRSQ).

The protein belongs to the orthohepadnavirus precore antigen family. Homodimerizes. In terms of processing, phosphorylated. Cleaved by host furin.

The protein localises to the secreted. It is found in the host nucleus. May regulate immune response to the intracellular capsid in acting as a T-cell tolerogen, by having an immunoregulatory effect which prevents destruction of infected cells by cytotoxic T-cells. This immune regulation may predispose to chronicity during perinatal infections and prevent severe liver injury during adult infections. The protein is External core antigen of Hepatitis B virus genotype D subtype ayw (isolate Italy/CI/1992) (HBV-D).